A 417-amino-acid polypeptide reads, in one-letter code: NADH-quinone oxidoreductase subunit D (417 aa).

It belongs to the complex I 49 kDa subunit family. As to quaternary structure, NDH-1 is composed of 14 different subunits. Subunits NuoB, C, D, E, F, and G constitute the peripheral sector of the complex.

The protein localises to the cell inner membrane. It carries out the reaction a quinone + NADH + 5 H(+)(in) = a quinol + NAD(+) + 4 H(+)(out). NDH-1 shuttles electrons from NADH, via FMN and iron-sulfur (Fe-S) centers, to quinones in the respiratory chain. The immediate electron acceptor for the enzyme in this species is believed to be ubiquinone. Couples the redox reaction to proton translocation (for every two electrons transferred, four hydrogen ions are translocated across the cytoplasmic membrane), and thus conserves the redox energy in a proton gradient. The protein is NADH-quinone oxidoreductase subunit D of Paracidovorax citrulli (strain AAC00-1) (Acidovorax citrulli).